The chain runs to 332 residues: MAEEKIYDITIIGGGPVGLWAAFYAGLRGMTVNIIESLSELGGQPAILYPEKKIYDIPAFPQTTGAELIENLLIQLKRFEDRVSIHLKEEVQTFKKTDGIFTIATSKGQHLSKAIVIACGNGAFAPRPLGVDNEEDFANNNLLYNVHSLDQFAGKKVVIAGGGDSAVDWANHLDGVAESVTLIHRRDAFRAHEHSVELLYQSSVNVMTPYVPLEIKGENGHAQSLTVQRVKSDEVVELPIDALIVSFGFSTNNKNLRNWNVDYKRSSITVNAQFETSQEGVYAIGGAAEYDGKIDLIAVGMGEAPIAINQAIQYIEPDGKNRPVHSTSLIEE.

FAD is bound by residues E36, Q44, Y49, V91, F124, and T327.

Belongs to the ferredoxin--NADP reductase type 2 family. As to quaternary structure, homodimer. It depends on FAD as a cofactor.

It carries out the reaction 2 reduced [2Fe-2S]-[ferredoxin] + NADP(+) + H(+) = 2 oxidized [2Fe-2S]-[ferredoxin] + NADPH. In Streptococcus thermophilus (strain CNRZ 1066), this protein is Ferredoxin--NADP reductase.